Here is a 117-residue protein sequence, read N- to C-terminus: Conotoxin vil14a (117 aa).

A signal peptide spans 1–22; that stretch reads MGFRVLVLVVMATTSALPFTFS. Positions 23 to 90 are excised as a propeptide; the sequence is EEPGRSPFRP…FAETPVGQKR (68 aa). The tract at residues 53–86 is disordered; it reads RADGQPPDMRQPEMRRPEMRRPEVRQPEFAETPV. The segment covering 62–80 has biased composition (basic and acidic residues); that stretch reads RQPEMRRPEMRRPEVRQPE. Intrachain disulfides connect cysteine 96/cysteine 116 and cysteine 100/cysteine 112.

It belongs to the conotoxin R superfamily. In terms of tissue distribution, expressed by the venom duct.

The protein localises to the secreted. This is Conotoxin vil14a from Conus villepinii (Villepin's cone).